Here is a 148-residue protein sequence, read N- to C-terminus: Ribosome maturation factor RimP (148 aa).

The protein belongs to the RimP family.

The protein resides in the cytoplasm. In terms of biological role, required for maturation of 30S ribosomal subunits. The polypeptide is Ribosome maturation factor RimP (Treponema denticola (strain ATCC 35405 / DSM 14222 / CIP 103919 / JCM 8153 / KCTC 15104)).